The sequence spans 1061 residues: RecBCD enzyme subunit RecC (1061 aa).

This sequence belongs to the RecC family. In terms of assembly, heterotrimer of RecB, RecC and RecD. All subunits contribute to DNA-binding.

In terms of biological role, a helicase/nuclease that prepares dsDNA breaks (DSB) for recombinational DNA repair. Binds to DSBs and unwinds DNA via a highly rapid and processive ATP-dependent bidirectional helicase activity. Unwinds dsDNA until it encounters a Chi (crossover hotspot instigator) sequence from the 3' direction. Cuts ssDNA a few nucleotides 3' to the Chi site. The properties and activities of the enzyme are changed at Chi. The Chi-altered holoenzyme produces a long 3'-ssDNA overhang and facilitates RecA-binding to the ssDNA for homologous DNA recombination and repair. Holoenzyme degrades any linearized DNA that is unable to undergo homologous recombination. In the holoenzyme this subunit recognizes the wild-type Chi sequence, and when added to isolated RecB increases its ATP-dependent helicase processivity. This Buchnera aphidicola subsp. Schizaphis graminum (strain Sg) protein is RecBCD enzyme subunit RecC.